A 276-amino-acid chain; its full sequence is NAD(+)--protein-threonine ADP-ribosyltransferase (276 aa).

Interacts directly with host ubiquitin.

The protein resides in the secreted. It is found in the host cell. The enzyme catalyses L-threonyl-[protein] + NAD(+) = O-(ADP-D-ribosyl)-L-threonyl-[protein] + nicotinamide + H(+). In terms of biological role, ADP-ribosyltransferase that specifically modifies host ubiquitin on 'Thr-66' residue, which causes the shutdown of polyubiquitin synthesis and disrupts the recognition and reversal of polyubiquitin in host cells during infection. Threonine ADP-ribosylation of ubiquitin prevents the transfer of ubiquitin from ubiquitin-activating enzyme E1 to ubiquitin-conjugating enzyme E2, which inhibits subsequent ubiquitin activation and leads to the shutdown of polyubiquitin synthesis in host cells. The modification also causes dysfunction of polyubiquitin chains in cells, thereby blocking host ubiquitin signaling. ADP-ribosylation by CteC is likely irreversible. Plays a crucial role in bacterial colonization in mice during infection. The sequence is that of NAD(+)--protein-threonine ADP-ribosyltransferase from Chromobacterium violaceum (strain ATCC 12472 / DSM 30191 / JCM 1249 / CCUG 213 / NBRC 12614 / NCIMB 9131 / NCTC 9757 / MK).